The following is a 1000-amino-acid chain: MTINIKYSSKFSSSKTSSSEELKPKTYIPAYYQPPVSMPKYYVNWLRIKLSLNKLKNIRAIYLFDQCQNFNQYQESSRKFSAGQVSSLTPWYSNFSNYSTVILRMKDTSLPPLENPSNGGTYLFNLITVFPSIALSFNYSWRGDTGPSISIFSFSLSVLFFSLFPQHKNICARAWCRPFRRSLSFSLRFIMSSEPASSSTEKVPEEPHPHSIKHKFQGPQFVIPRALSDYVLNVNNQTPESYEKALNAKYGRDDYITLCLHVTSLCTEYGPLDDGPEYVLLCDSRARVDKLIEDLVKLLEIDTDYVQLELHGGKRLHLQKPDAVLRDIAYKQSNEGSDKFFLEMKLVPSESMKAKIMKQEEEEEKARKHGQYQQYQEYHQQHQAMNDGQSSSSVPSTSSPSCSSEANRKEMETVREPAGPSELMRAINAPVAPAPVVIKIETPVALPEEDETLMDDDEMPSLTVEAPSEEASFEAEQPSPQVPQASIEGPSQQQQIPGTSQQKRQVARGSRTNMISYHDLPPGTGNAPPMACPQVTLKLEKNVPFEAKIRAVAGYTRKPISEVQKMRPSDLESIFHSICIASVQRIKRRNELVQQLQEINAQSCKSPTMTMNKKFTLAKAYQRVQNEIEKIDREQILPQQYMNMPPMPPQGQQRLPPPAYPPGILPPQQNRQQGVPPQFQRSPQFMIGPDGQRYAHPYMQLPNSNQRARILNTSSVQPSEEVRNRLVKIEAMAMNMAQLNPPRPPPPQPPHRALQGELQFLRPGAPDPCNFRPDSKQTYNNTYVTVASPATLTNSIIPWHFPPYEKSGRLNVSNTIKAINEYRLLCNSRQADPASFLEFYFLGDPMPHFNKILSIADYNMYLSRRRCDEADVKIHRMSHSDQLQLYLLELQSDESNVEKWKTFYRIMQWDLPLNNEFPRILLPSSLDIGRPVVDRKKKSIDQVMNHIHRMHSQRPPSMGNSSTSSEASSTSPTNAATATSSPASNRPTTSTAQPPTLNPT.

3 disordered regions span residues 355–374, 379–422, and 466–509; these read KIMK…QYQQ, HQQH…GPSE, and APSE…VARG. A compositionally biased stretch (low complexity) spans 390-404; the sequence is SSSSVPSTSSPSCSS. Residues 406–415 show a composition bias toward basic and acidic residues; sequence ANRKEMETVR. Positions 489–502 are enriched in low complexity; it reads GPSQQQQIPGTSQQ. The tract at residues 633 to 720 is RNA-binding; that stretch reads REQILPQQYM…LNTSSVQPSE (88 aa). The interval 948-1000 is disordered; the sequence is HRMHSQRPPSMGNSSTSSEASSTSPTNAATATSSPASNRPTTSTAQPPTLNPT. A compositionally biased stretch (low complexity) spans 960–992; the sequence is NSSTSSEASSTSPTNAATATSSPASNRPTTSTA.

In terms of assembly, binds through its N-terminal region to the N-terminal region of sop-2.

The protein localises to the nucleus. In terms of biological role, acts synergistically with sop-2 to maintain the transcriptionally repressive state of homeotic genes throughout development. Not required to initiate repression, but to maintain it during later stages of development. Also required to repress expression of other genes. Binds RNA in a sequence-independent manner. This chain is Sop-2-related protein 1 (sor-1), found in Caenorhabditis elegans.